We begin with the raw amino-acid sequence, 154 residues long: SsrA-binding protein (154 aa).

Belongs to the SmpB family.

Its subcellular location is the cytoplasm. Its function is as follows. Required for rescue of stalled ribosomes mediated by trans-translation. Binds to transfer-messenger RNA (tmRNA), required for stable association of tmRNA with ribosomes. tmRNA and SmpB together mimic tRNA shape, replacing the anticodon stem-loop with SmpB. tmRNA is encoded by the ssrA gene; the 2 termini fold to resemble tRNA(Ala) and it encodes a 'tag peptide', a short internal open reading frame. During trans-translation Ala-aminoacylated tmRNA acts like a tRNA, entering the A-site of stalled ribosomes, displacing the stalled mRNA. The ribosome then switches to translate the ORF on the tmRNA; the nascent peptide is terminated with the 'tag peptide' encoded by the tmRNA and targeted for degradation. The ribosome is freed to recommence translation, which seems to be the essential function of trans-translation. This is SsrA-binding protein from Staphylococcus aureus (strain USA300).